The following is a 167-amino-acid chain: CGG triplet repeat-binding protein 1 (167 aa).

Ser-56 is subject to Phosphoserine. The tract at residues 65 to 86 (KTHTKRKAEFEEQNVRKKQRPL) is disordered. Residues 80 to 84 (RKKQR) carry the Nuclear localization signal motif. Residue Ser-164 is modified to Phosphoserine.

The protein resides in the nucleus. In terms of biological role, binds to nonmethylated 5'-d(CGG)(n)-3' trinucleotide repeats in the FMR1 promoter. May play a role in regulating FMR1 promoter. This chain is CGG triplet repeat-binding protein 1 (Cggbp1), found in Mus musculus (Mouse).